Here is an 870-residue protein sequence, read N- to C-terminus: Alanine--tRNA ligase (870 aa).

The Zn(2+) site is built by His-585, His-589, Cys-689, and His-693.

It belongs to the class-II aminoacyl-tRNA synthetase family. Zn(2+) serves as cofactor.

The protein resides in the cytoplasm. The catalysed reaction is tRNA(Ala) + L-alanine + ATP = L-alanyl-tRNA(Ala) + AMP + diphosphate. Its function is as follows. Catalyzes the attachment of alanine to tRNA(Ala) in a two-step reaction: alanine is first activated by ATP to form Ala-AMP and then transferred to the acceptor end of tRNA(Ala). Also edits incorrectly charged Ser-tRNA(Ala) and Gly-tRNA(Ala) via its editing domain. The polypeptide is Alanine--tRNA ligase (Picrophilus torridus (strain ATCC 700027 / DSM 9790 / JCM 10055 / NBRC 100828 / KAW 2/3)).